A 320-amino-acid chain; its full sequence is Phosphatidylserine decarboxylase proenzyme (320 aa).

Active-site charge relay system; for autoendoproteolytic cleavage activity residues include aspartate 90, histidine 147, and serine 254. Catalysis depends on serine 254, which acts as the Schiff-base intermediate with substrate; via pyruvic acid; for decarboxylase activity. At serine 254 the chain carries Pyruvic acid (Ser); by autocatalysis. Positions 290–320 (TAAAEPAPLPEEEIRAEHRASPLVDDKQDQG) are disordered. Over residues 301-320 (EEIRAEHRASPLVDDKQDQG) the composition is skewed to basic and acidic residues.

The protein belongs to the phosphatidylserine decarboxylase family. PSD-B subfamily. Prokaryotic type I sub-subfamily. As to quaternary structure, heterodimer of a large membrane-associated beta subunit and a small pyruvoyl-containing alpha subunit. Requires pyruvate as cofactor. Is synthesized initially as an inactive proenzyme. Formation of the active enzyme involves a self-maturation process in which the active site pyruvoyl group is generated from an internal serine residue via an autocatalytic post-translational modification. Two non-identical subunits are generated from the proenzyme in this reaction, and the pyruvate is formed at the N-terminus of the alpha chain, which is derived from the carboxyl end of the proenzyme. The autoendoproteolytic cleavage occurs by a canonical serine protease mechanism, in which the side chain hydroxyl group of the serine supplies its oxygen atom to form the C-terminus of the beta chain, while the remainder of the serine residue undergoes an oxidative deamination to produce ammonia and the pyruvoyl prosthetic group on the alpha chain. During this reaction, the Ser that is part of the protease active site of the proenzyme becomes the pyruvoyl prosthetic group, which constitutes an essential element of the active site of the mature decarboxylase.

The protein localises to the cell membrane. The enzyme catalyses a 1,2-diacyl-sn-glycero-3-phospho-L-serine + H(+) = a 1,2-diacyl-sn-glycero-3-phosphoethanolamine + CO2. It participates in phospholipid metabolism; phosphatidylethanolamine biosynthesis; phosphatidylethanolamine from CDP-diacylglycerol: step 2/2. Functionally, catalyzes the formation of phosphatidylethanolamine (PtdEtn) from phosphatidylserine (PtdSer). This chain is Phosphatidylserine decarboxylase proenzyme, found in Klebsiella pneumoniae subsp. pneumoniae (strain ATCC 700721 / MGH 78578).